A 444-amino-acid polypeptide reads, in one-letter code: Phosphoglucosamine mutase (444 aa).

The active-site Phosphoserine intermediate is S102. Positions 102, 241, 243, and 245 each coordinate Mg(2+). Phosphoserine is present on S102.

Belongs to the phosphohexose mutase family. Mg(2+) is required as a cofactor. In terms of processing, activated by phosphorylation.

The catalysed reaction is alpha-D-glucosamine 1-phosphate = D-glucosamine 6-phosphate. In terms of biological role, catalyzes the conversion of glucosamine-6-phosphate to glucosamine-1-phosphate. In Mannheimia succiniciproducens (strain KCTC 0769BP / MBEL55E), this protein is Phosphoglucosamine mutase.